Reading from the N-terminus, the 54-residue chain is Light-harvesting protein B-800/850 alpha chain (54 aa).

The Cytoplasmic portion of the chain corresponds to 1 to 14 (MTNGKIWLVVKPTV). The helical transmembrane segment at 15–35 (GVPLFLSAAVIASVVIHAAVL) threads the bilayer. Residue histidine 31 coordinates a bacteriochlorophyll. Topologically, residues 36–54 (TTTTWLPAYYQGSAAVAAE) are periplasmic.

Belongs to the antenna complex alpha subunit family. In terms of assembly, the core complex is formed by different alpha and beta chains, binding bacteriochlorophyll molecules, and arranged most probably in tetrameric structures disposed around the reaction center. The non-pigmented gamma chains may constitute additional components.

The protein resides in the cell inner membrane. Antenna complexes are light-harvesting systems, which transfer the excitation energy to the reaction centers. The sequence is that of Light-harvesting protein B-800/850 alpha chain (pucA) from Cereibacter sphaeroides (Rhodobacter sphaeroides).